Here is a 164-residue protein sequence, read N- to C-terminus: 6,7-dimethyl-8-ribityllumazine synthase 1 (164 aa).

Residues Phe27, 58–60, and 87–89 contribute to the 5-amino-6-(D-ribitylamino)uracil site; these read SLE and TII. 92-93 provides a ligand contact to (2S)-2-hydroxy-3-oxobutyl phosphate; that stretch reads DT. His95 acts as the Proton donor in catalysis. 5-amino-6-(D-ribitylamino)uracil is bound at residue Asn120. Arg134 serves as a coordination point for (2S)-2-hydroxy-3-oxobutyl phosphate.

This sequence belongs to the DMRL synthase family. As to quaternary structure, homopentamer.

The catalysed reaction is (2S)-2-hydroxy-3-oxobutyl phosphate + 5-amino-6-(D-ribitylamino)uracil = 6,7-dimethyl-8-(1-D-ribityl)lumazine + phosphate + 2 H2O + H(+). It participates in cofactor biosynthesis; riboflavin biosynthesis; riboflavin from 2-hydroxy-3-oxobutyl phosphate and 5-amino-6-(D-ribitylamino)uracil: step 1/2. Its function is as follows. Catalyzes the formation of 6,7-dimethyl-8-ribityllumazine by condensation of 5-amino-6-(D-ribitylamino)uracil with 3,4-dihydroxy-2-butanone 4-phosphate. This is the penultimate step in the biosynthesis of riboflavin. This Mesorhizobium japonicum (strain LMG 29417 / CECT 9101 / MAFF 303099) (Mesorhizobium loti (strain MAFF 303099)) protein is 6,7-dimethyl-8-ribityllumazine synthase 1 (ribH1).